The following is a 417-amino-acid chain: Serine/threonine transporter SstT (417 aa).

8 consecutive transmembrane segments (helical) span residues 21-41 (ILAG…VAKM), 49-69 (FISA…MASI), 83-103 (ILVL…VASF), 142-162 (ALIN…GLAL), 193-213 (IGIF…ALAG), 218-238 (LLVL…LIVF), 291-311 (IPLG…ILTL), and 331-351 (LVAA…LLLI).

It belongs to the dicarboxylate/amino acid:cation symporter (DAACS) (TC 2.A.23) family.

The protein localises to the cell inner membrane. The enzyme catalyses L-serine(in) + Na(+)(in) = L-serine(out) + Na(+)(out). The catalysed reaction is L-threonine(in) + Na(+)(in) = L-threonine(out) + Na(+)(out). In terms of biological role, involved in the import of serine and threonine into the cell, with the concomitant import of sodium (symport system). This chain is Serine/threonine transporter SstT, found in Proteus mirabilis (strain HI4320).